The following is a 108-amino-acid chain: Nucleoid-associated protein mma_2329 (108 aa).

It belongs to the YbaB/EbfC family. As to quaternary structure, homodimer.

The protein localises to the cytoplasm. It is found in the nucleoid. Functionally, binds to DNA and alters its conformation. May be involved in regulation of gene expression, nucleoid organization and DNA protection. The sequence is that of Nucleoid-associated protein mma_2329 from Janthinobacterium sp. (strain Marseille) (Minibacterium massiliensis).